Here is a 513-residue protein sequence, read N- to C-terminus: Cytochrome P450 1A2 (513 aa).

O-linked (GlcNAc) serine glycosylation is present at Ser68. Phe225 lines the substrate pocket. Residue Cys456 participates in heme binding.

The protein belongs to the cytochrome P450 family. In terms of assembly, interacts with PGRMC1; the interaction requires PGRMC1 homodimerization. Heme serves as cofactor.

It is found in the endoplasmic reticulum membrane. It localises to the microsome membrane. It catalyses the reaction an organic molecule + reduced [NADPH--hemoprotein reductase] + O2 = an alcohol + oxidized [NADPH--hemoprotein reductase] + H2O + H(+). It carries out the reaction 17beta-estradiol + reduced [NADPH--hemoprotein reductase] + O2 = 2-hydroxy-17beta-estradiol + oxidized [NADPH--hemoprotein reductase] + H2O + H(+). The catalysed reaction is 17beta-estradiol + reduced [NADPH--hemoprotein reductase] + O2 = 4-hydroxy-17beta-estradiol + oxidized [NADPH--hemoprotein reductase] + H2O + H(+). The enzyme catalyses estrone + reduced [NADPH--hemoprotein reductase] + O2 = 2-hydroxyestrone + oxidized [NADPH--hemoprotein reductase] + H2O + H(+). It catalyses the reaction estrone + reduced [NADPH--hemoprotein reductase] + O2 = 4-hydroxyestrone + oxidized [NADPH--hemoprotein reductase] + H2O + H(+). It carries out the reaction cholesterol + reduced [NADPH--hemoprotein reductase] + O2 = 25-hydroxycholesterol + oxidized [NADPH--hemoprotein reductase] + H2O + H(+). The catalysed reaction is all-trans-retinol + reduced [NADPH--hemoprotein reductase] + O2 = all-trans-retinal + oxidized [NADPH--hemoprotein reductase] + 2 H2O + H(+). The enzyme catalyses all-trans-retinal + reduced [NADPH--hemoprotein reductase] + O2 = all-trans-retinoate + oxidized [NADPH--hemoprotein reductase] + H2O + 2 H(+). It catalyses the reaction (5Z,8Z,11Z,14Z)-eicosatetraenoate + reduced [NADPH--hemoprotein reductase] + O2 = (14R,15S)-epoxy-(5Z,8Z,11Z)-eicosatrienoate + oxidized [NADPH--hemoprotein reductase] + H2O + H(+). It carries out the reaction (5Z,8Z,11Z,14Z)-eicosatetraenoate + reduced [NADPH--hemoprotein reductase] + O2 = (14S,15R)-epoxy-(5Z,8Z,11Z)-eicosatrienoate + oxidized [NADPH--hemoprotein reductase] + H2O + H(+). The catalysed reaction is (5Z,8Z,11Z,14Z,17Z)-eicosapentaenoate + reduced [NADPH--hemoprotein reductase] + O2 = (17R,18S)-epoxy-(5Z,8Z,11Z,14Z)-eicosatetraenoate + oxidized [NADPH--hemoprotein reductase] + H2O + H(+). The enzyme catalyses (4Z,7Z,10Z,13Z,16Z,19Z)-docosahexaenoate + reduced [NADPH--hemoprotein reductase] + O2 = (19R,20S)-epoxy-(4Z,7Z,10Z,13Z,16Z)-docosapentaenoate + oxidized [NADPH--hemoprotein reductase] + H2O + H(+). It catalyses the reaction (5S)-hydroperoxy-(6E,8Z,11Z,14Z)-eicosatetraenoate = 5-oxo-(6E,8Z,11Z,14Z)-eicosatetraenoate + H2O. It carries out the reaction (12S)-hydroperoxy-(5Z,8Z,10E,14Z)-eicosatetraenoate = 12-oxo-(5Z,8Z,10E,14Z)-eicosatetraenoate + H2O. The catalysed reaction is (15S)-hydroperoxy-(5Z,8Z,11Z,13E)-eicosatetraenoate = 15-oxo-(5Z,8Z,11Z,13E)-eicosatetraenoate + H2O. The enzyme catalyses (13S)-hydroperoxy-(9Z,11E)-octadecadienoate = 13-oxo-(9Z,11E)-octadecadienoate + H2O. It catalyses the reaction (5Z,8Z,11Z,14Z)-eicosatetraenoate + reduced [NADPH--hemoprotein reductase] + O2 = 13-hydroxy-(5Z,8Z,11Z,14Z)-eicosatetraenoate + oxidized [NADPH--hemoprotein reductase] + H2O + H(+). It carries out the reaction (5Z,8Z,11Z,14Z)-eicosatetraenoate + reduced [NADPH--hemoprotein reductase] + O2 = 19-hydroxy-(5Z,8Z,11Z,14Z)-eicosatetraenoate + oxidized [NADPH--hemoprotein reductase] + H2O + H(+). The catalysed reaction is (9Z,12Z)-octadecadienoate + reduced [NADPH--hemoprotein reductase] + O2 = 11-hydroxy-(9Z,12Z)-octadecadienoate + oxidized [NADPH--hemoprotein reductase] + H2O + H(+). Its pathway is cofactor metabolism; retinol metabolism. It functions in the pathway steroid metabolism; cholesterol metabolism. It participates in lipid metabolism; arachidonate metabolism. Its function is as follows. A cytochrome P450 monooxygenase involved in the metabolism of various endogenous substrates, including fatty acids, steroid hormones and vitamins. Mechanistically, uses molecular oxygen inserting one oxygen atom into a substrate, and reducing the second into a water molecule, with two electrons provided by NADPH via cytochrome P450 reductase (NADPH--hemoprotein reductase). Catalyzes the hydroxylation of carbon-hydrogen bonds. Exhibits high catalytic activity for the formation of hydroxyestrogens from estrone (E1) and 17beta-estradiol (E2), namely 2-hydroxy E1 and E2. Metabolizes cholesterol toward 25-hydroxycholesterol, a physiological regulator of cellular cholesterol homeostasis. May act as a major enzyme for all-trans retinoic acid biosynthesis in the liver. Catalyzes two successive oxidative transformation of all-trans retinol to all-trans retinal and then to the active form all-trans retinoic acid. Primarily catalyzes stereoselective epoxidation of the last double bond of polyunsaturated fatty acids (PUFA), displaying a strong preference for the (R,S) stereoisomer. Catalyzes bisallylic hydroxylation and omega-1 hydroxylation of PUFA. May also participate in eicosanoids metabolism by converting hydroperoxide species into oxo metabolites (lipoxygenase-like reaction, NADPH-independent). Plays a role in the oxidative metabolism of xenobiotics. Catalyzes the N-hydroxylation of heterocyclic amines and the O-deethylation of phenacetin. Metabolizes caffeine via N3-demethylation. In Mus musculus (Mouse), this protein is Cytochrome P450 1A2 (Cyp1a2).